We begin with the raw amino-acid sequence, 441 residues long: Membrane-bound protease PH1510 (441 aa).

A signal peptide spans 1 to 20 (MRRILLSMIVLIFLASPILA). 64–67 (GGRA) is a binding site for substrate. S97 (nucleophile) is an active-site residue. 119–124 (ACRPIL) is a binding site for substrate. The Proton donor/acceptor role is filled by K138. Transmembrane regions (helical) follow at residues 239–259 (VAYL…LTPG), 271–291 (IILA…ILLI), 307–327 (FGLF…LLFG), and 344–364 (ILII…MAAV).

It belongs to the peptidase S14 family. Homodimer.

It localises to the membrane. Its activity is regulated as follows. Inhibited by divalent metal cations, including Mg(2+), Mn(2+), Ca(2+) and Zn(2+). Mildly inhibited by 0.01 % SDS and 0.1% dodecyl-beta-D-maltoside. Activity is nearly abolished by 1 % SDS. In terms of biological role, protease that cleaves its substrates preferentially near hydrophobic or aromatic amino acid residues. Can degrade casein and the stomatin homolog PH1511 (in vitro). This is Membrane-bound protease PH1510 from Pyrococcus horikoshii (strain ATCC 700860 / DSM 12428 / JCM 9974 / NBRC 100139 / OT-3).